The following is a 337-amino-acid chain: MTEIRNNWTKEEISAIYNSPILDLMYRGATVHREFHDPQEVQVCTLLSIKTGGCPEDCSYCPQAARYHTDVKVEKLMDVKDVLNSALEAKESGSTRFCMGAAWREVRDNKDFDKVIDMVKGVSTMGMEVCCTLGMLTPEQADKLKDAGLYAYNHNLDTSAEHYDKVITTRTYDDRLETLDNVRNAKISVCSGGIIGMGESHGDRVGMLHTLANMVEHPESVPVNALVPVEGTPLEDQPRVSVWEMVRMIATARIIMPKAMVRLSAGRVRMNTEEQALCFLAGANSIFAGDKLLTTPNPEVNADKEMFQVLNLKPRQSFKNGDAPKIKFEQIPSALVK.

In terms of domain architecture, Radical SAM core spans 39–267 (QEVQVCTLLS…KAMVRLSAGR (229 aa)). Positions 54, 58, and 61 each coordinate [4Fe-4S] cluster. Positions 98, 130, 190, and 262 each coordinate [2Fe-2S] cluster.

It belongs to the radical SAM superfamily. Biotin synthase family. In terms of assembly, homodimer. [4Fe-4S] cluster is required as a cofactor. Requires [2Fe-2S] cluster as cofactor.

The catalysed reaction is (4R,5S)-dethiobiotin + (sulfur carrier)-SH + 2 reduced [2Fe-2S]-[ferredoxin] + 2 S-adenosyl-L-methionine = (sulfur carrier)-H + biotin + 2 5'-deoxyadenosine + 2 L-methionine + 2 oxidized [2Fe-2S]-[ferredoxin]. The protein operates within cofactor biosynthesis; biotin biosynthesis; biotin from 7,8-diaminononanoate: step 2/2. In terms of biological role, catalyzes the conversion of dethiobiotin (DTB) to biotin by the insertion of a sulfur atom into dethiobiotin via a radical-based mechanism. This is Biotin synthase from Cytophaga hutchinsonii (strain ATCC 33406 / DSM 1761 / CIP 103989 / NBRC 15051 / NCIMB 9469 / D465).